The primary structure comprises 111 residues: UPF0375 protein ule-4 (111 aa).

A signal peptide spans 1–18; the sequence is MNSRLVLLLAVSVALVSA. Asn-23 and Asn-58 each carry an N-linked (GlcNAc...) asparagine glycan.

It belongs to the UPF0375 family.

It localises to the secreted. The chain is UPF0375 protein ule-4 from Caenorhabditis elegans.